The chain runs to 599 residues: Kelch repeat and BTB domain-containing protein 8 (599 aa).

The segment at 1 to 25 is disordered; that stretch reads MAASADLSKSSPTPNGIPSSDTAND. Positions 7–25 are enriched in polar residues; sequence LSKSSPTPNGIPSSDTAND. One can recognise a BTB domain in the interval 49 to 117; the sequence is TDIVVEVDHG…AYTSRVILTE (69 aa). Positions 152-254 constitute a BACK domain; that stretch reads SIGVFIFADH…MEDTFIEKIP (103 aa). 5 Kelch repeats span residues 334–388, 389–439, 441–479, 481–530, and 540–586; these read DIYI…YCCG, KMYA…EHKE, IYVL…VYKD, IYYI…LFQN, and QVTV…FECA.

It belongs to the KBTBD8 family. Component of the BCR(KBTBD8) E3 ubiquitin ligase complex, at least composed of CUL3, KBTBD8 and RBX1.

Its subcellular location is the cytoplasm. It is found in the cytoskeleton. The protein resides in the spindle. The protein localises to the golgi apparatus. Functionally, substrate-specific adapter of a BCR (BTB-CUL3-RBX1) E3 ubiquitin ligase complex that acts as a regulator of neural crest specification. The BCR(KBTBD8) complex acts by mediating monoubiquitination of NOLC1 and TCOF1: monoubiquitination promotes the formation of a NOLC1-TCOF1 complex that acts as a platform to connect RNA polymerase I with enzymes responsible for ribosomal processing and modification, leading to remodel the translational program of differentiating cells in favor of neural crest specification. The protein is Kelch repeat and BTB domain-containing protein 8 (Kbtbd8) of Mus musculus (Mouse).